A 198-amino-acid chain; its full sequence is MKTQQIAQQLILGSSSIYRRDLLQRLQIPFDVSNPDIDETPLPGETPDATAVRLAAAKTRAVAATHPGALIIGADQVAVFEGIQLGKPLNHLNATRQLQLIRGKEVSFYTALCLFNSAQDTTRARLVPSRVKFRLLSDRQIENYLDKEQPYHCAASSKLEGLGIALIEHMEGEDPTALIGLPLIALVEMLTLEGVEIV.

The Proton acceptor role is filled by D75.

The protein belongs to the Maf family. YceF subfamily. The cofactor is a divalent metal cation.

Its subcellular location is the cytoplasm. The enzyme catalyses N(7)-methyl-GTP + H2O = N(7)-methyl-GMP + diphosphate + H(+). In terms of biological role, nucleoside triphosphate pyrophosphatase that hydrolyzes 7-methyl-GTP (m(7)GTP). May have a dual role in cell division arrest and in preventing the incorporation of modified nucleotides into cellular nucleic acids. This chain is 7-methyl-GTP pyrophosphatase, found in Nitrosospira multiformis (strain ATCC 25196 / NCIMB 11849 / C 71).